Consider the following 550-residue polypeptide: ATP synthase subunit alpha (550 aa).

ATP is bound at residue 172–179 (GDRKTGKT). The disordered stretch occupies residues 521–550 (EPAAEPLAGEEDRETVTRFHDDATDRPAGS). Residues 534–550 (ETVTRFHDDATDRPAGS) are compositionally biased toward basic and acidic residues.

This sequence belongs to the ATPase alpha/beta chains family. F-type ATPases have 2 components, CF(1) - the catalytic core - and CF(0) - the membrane proton channel. CF(1) has five subunits: alpha(3), beta(3), gamma(1), delta(1), epsilon(1). CF(0) has three main subunits: a(1), b(2) and c(9-12). The alpha and beta chains form an alternating ring which encloses part of the gamma chain. CF(1) is attached to CF(0) by a central stalk formed by the gamma and epsilon chains, while a peripheral stalk is formed by the delta and b chains.

It localises to the cell membrane. It catalyses the reaction ATP + H2O + 4 H(+)(in) = ADP + phosphate + 5 H(+)(out). Its function is as follows. Produces ATP from ADP in the presence of a proton gradient across the membrane. The alpha chain is a regulatory subunit. The protein is ATP synthase subunit alpha of Salinispora tropica (strain ATCC BAA-916 / DSM 44818 / JCM 13857 / NBRC 105044 / CNB-440).